The sequence spans 434 residues: Forkhead box protein A2 (434 aa).

A DNA-binding region (fork-head) is located at residues 149 to 243; sequence KPPYSYISLI…ENGCYLRRQK (95 aa). Basic and acidic residues predominate over residues 249-262; sequence KKPSLREGGGKKLS. Positions 249-339 are disordered; it reads KKPSLREGGG…VLSHEAQSHL (91 aa). 2 stretches are compositionally biased toward low complexity: residues 263–291 and 317–333; these read EGSS…SSSP and ASQA…VLSH.

The protein localises to the nucleus. Acts as a transcriptional activator during early development, limiting the extent of mesoderm formation in the gastrula. Binds to DNA via the target sequence 5'-GT[AC]AACA-3', with 5'-GTAAACA-3' being the preferred binding site. In Xenopus tropicalis (Western clawed frog), this protein is Forkhead box protein A2.